Here is a 1954-residue protein sequence, read N- to C-terminus: Protein abnormal spindle (1954 aa).

The segment at valine 134–alanine 155 is disordered. Phosphoserine is present on residues serine 151 and serine 360. Threonine 364 is subject to Phosphothreonine. A phosphoserine mark is found at serine 388, serine 390, serine 395, serine 398, serine 491, serine 495, serine 497, serine 501, serine 504, and serine 514. The tract at residues lysine 476–alanine 548 is disordered. The segment covering aspartate 498–arginine 507 has biased composition (polar residues). A compositionally biased stretch (low complexity) spans arginine 528–alanine 548. A Calponin-homology (CH) domain is found at lysine 836–arginine 968. IQ domains lie at arginine 1004–glutamine 1033, threonine 1386–glutamine 1415, and glutamine 1467–glutamine 1496. Residues arginine 1614–arginine 1641 adopt a coiled-coil conformation. IQ domains follow at residues leucine 1656 to leucine 1687 and glutamine 1690 to arginine 1721.

It is found in the cytoplasm. It localises to the nucleus. The protein localises to the cytoskeleton. The protein resides in the spindle. Its subcellular location is the microtubule organizing center. It is found in the perinuclear region. Required to maintain the structure of the centrosomal microtubule organizing center (MTOC) during mitosis. May have a preferential role in regulating neurogenesis. Required for germ cell mitosis and oocyte differentiation. The polypeptide is Protein abnormal spindle (Drosophila melanogaster (Fruit fly)).